The following is a 351-amino-acid chain: Circumsporozoite protein (351 aa).

Positions 1 to 22 are cleaved as a signal peptide; it reads MKNFILLAVSSILLVDLLPTHF. The segment at 50–266 is disordered; it reads AQVRQSASRG…GQNNQGANVP (217 aa). Positions 61–96 are enriched in basic and acidic residues; that stretch reads GLGEKPKEGADKEKKKEKEKEKEEEPKKPNENKLKQ. The tract at residues 80-88 is required for the binding to heparan sulfate proteoglycans (HSPGs) on the surface of host hepatocytes; it reads KEKEEEPKK. The tract at residues 93 to 97 is region I; contains the proteolytic cleavage site; sequence KLKQP. Residues 97-219 are compositionally biased toward low complexity; that stretch reads PEQPAAGAGG…AGARGEQPAA (123 aa). Repeat copies occupy residues 101-109, 110-118, 119-127, 128-136, 137-145, 146-154, 155-163, 164-172, 173-181, 182-190, 191-199, 200-208, 209-217, and 218-226. Positions 101-226 are 14 X 9 AA tandem repeats of A-A-G-A-[GR]-G-E-Q-P; it reads AAGAGGEQPA…PAAGAGGEQP (126 aa). Positions 244 to 256 are enriched in gly residues; that stretch reads GARGGNAGAGKGQ. The TSP type-1 domain maps to 277-329; it reads KIRSSVTTEWTPCSVTCGNGVRIRRKGHAGNKKAEDLTMDDLEVEACVMDKCA. 2 disulfide bridges follow: C289/C323 and C293/C328. Residue T292 is glycosylated (O-linked (Fuc) threonine). Residue C328 is the site of GPI-anchor amidated cysteine attachment. A propeptide spans 329–351 (removed in mature form); it reads AGIFNVVSNSLGLVILLVLALFN.

Belongs to the plasmodium circumsporozoite protein family. During host cell invasion, proteolytically cleaved at the cell membrane in the region I by a papain-like cysteine protease of parasite origin. Cleavage is triggered by the sporozoite contact with highly sulfated heparan sulfate proteoglycans (HSPGs) present on the host hepatocyte cell surface. Cleavage exposes the TSP type-1 (TSR) domain and is required for productive invasion of host hepatocytes but not for adhesion to the host cell membrane. Cleavage is dispensable for sporozoite development in the oocyst, motility and for traversal of host and vector cells. In terms of processing, O-glycosylated; maybe by POFUT2.

It localises to the cell membrane. Its subcellular location is the cytoplasm. Essential sporozoite protein. In the mosquito vector, required for sporozoite development in the oocyst, migration through the vector hemolymph and entry into the vector salivary glands. In the vertebrate host, required for sporozoite migration through the host dermis and infection of host hepatocytes. Binds to highly sulfated heparan sulfate proteoglycans (HSPGs) on the surface of host hepatocytes. Its function is as follows. In the vertebrate host, binds to highly sulfated heparan sulfate proteoglycans (HSPGs) on the surface of host hepatocytes and is required for sporozoite invasion of the host hepatocytes. The chain is Circumsporozoite protein from Plasmodium knowlesi (strain nuri).